The sequence spans 720 residues: Capsid protein (720 aa).

Disordered stretches follow at residues 546-569 and 616-691; these read GTQR…GPNF and TEPS…RDRD. The span at 652–664 shows a compositional bias: acidic residues; it reads PTDEDERYLEAEA.

Belongs to the anelloviridae capsid protein family.

The protein resides in the virion. In terms of biological role, self-assembles to form an icosahedral capsid with a T=1 symmetry, about 30 nm in diameter, and consisting of 60 capsid proteins. The capsid encapsulates the genomic DNA. Capsid protein is involved in attachment and entry into the host cell. In Torque teno douroucouli virus (isolate At-TTV3), this protein is Capsid protein.